The chain runs to 1049 residues: Vacuolar membrane protease (1049 aa).

The Cytoplasmic portion of the chain corresponds to 1 to 11 (MKCYNPSAFVP). A helical transmembrane segment spans residues 12–32 (MAVTLVTVIIYLGVFIPLLII). Topologically, residues 33–438 (QETVPSAPDD…TVFAVFKLRT (406 aa)) are vacuolar. N-linked (GlcNAc...) asparagine glycosylation occurs at asparagine 50. The tract at residues 114–135 (DAEAPESVPSPSNSNDGSAERY) is disordered. N-linked (GlcNAc...) asparagine glycosylation occurs at asparagine 157. Histidine 221 and aspartate 233 together coordinate Zn(2+). Glutamate 267 serves as the catalytic Proton acceptor. The Zn(2+) site is built by glutamate 268, glutamate 293, and histidine 365. A helical transmembrane segment spans residues 439-459 (LFAWSLTLLIAAPLMLFAVSY). Residues 460-495 (LLNRQDKFYFFAGSIKAKGPEDEPISLGGWRGAFRY) are Cytoplasmic-facing. A helical transmembrane segment spans residues 496–516 (PITLIITCAITFGCASLINKI). The Vacuolar segment spans residues 517-526 (NPMIVYSSPY). Residues 527–547 (SVWSMSASLFFSIFWFIMAGC) form a helical membrane-spanning segment. At 548–557 (NFVRPSALQR) the chain is on the cytoplasmic side. The chain crosses the membrane as a helical span at residues 558–578 (GYAFMWLFVFGWIILVAATVY). The Vacuolar portion of the chain corresponds to 579-585 (EDRFKIS). Residues 586–606 (GGYLFVFYEAAIFLATLIAIG) traverse the membrane as a helical segment. The Cytoplasmic portion of the chain corresponds to 607-740 (EQFALPKKST…LPIWTWLVQY (134 aa)). The interval 621–686 (SQLDHDGNQD…IGGGAPTQRS (66 aa)) is disordered. A compositionally biased stretch (basic and acidic residues) spans 622–633 (QLDHDGNQDSHH). Residues 655-664 (GQEEDPEDNV) are compositionally biased toward acidic residues. The helical transmembrane segment at 741 to 761 (LLVGPFILIVVGQVGLFLVAA) threads the bilayer. The Vacuolar portion of the chain corresponds to 762–773 (LHQTGTDGSPLL). Residues 774-794 (LPYLVVAVFSILLLLPVTPFI) form a helical membrane-spanning segment. Over 795–801 (HRLTHHM) the chain is Cytoplasmic. A helical membrane pass occupies residues 802–822 (PTFFFLVFIGTLIYNLVAFPF). At 823-1049 (SPNNRYKAYF…LVEGSKRFVV (227 aa)) the chain is on the vacuolar side. Asparagine 914 carries N-linked (GlcNAc...) asparagine glycosylation.

It belongs to the peptidase M28 family. Requires Zn(2+) as cofactor.

The protein localises to the vacuole membrane. Functionally, may be involved in vacuolar sorting and osmoregulation. The polypeptide is Vacuolar membrane protease (Botryotinia fuckeliana (strain B05.10) (Noble rot fungus)).